The sequence spans 154 residues: UPF0225 protein Spro_2712 (154 aa).

It belongs to the UPF0225 family.

The sequence is that of UPF0225 protein Spro_2712 from Serratia proteamaculans (strain 568).